We begin with the raw amino-acid sequence, 408 residues long: Flavohemoprotein (408 aa).

The Globin domain occupies 1–138 (MLSEKTIRIV…LADIFIGREG (138 aa)). Histidine 85 serves as a coordination point for heme b. Residues tyrosine 95 and glutamate 137 each act as charge relay system in the active site. The segment at 149–408 (GGWNGTRTFV…FGPKEELVAV (260 aa)) is reductase. In terms of domain architecture, FAD-binding FR-type spans 152-263 (NGTRTFVVTK…GPPCGEFTVD (112 aa)). FAD is bound by residues tyrosine 190 and 205–208 (RNYS). 277-282 (GIGVTP) is an NADP(+) binding site. FAD is bound at residue 398 to 401 (FFGP).

This sequence belongs to the globin family. Two-domain flavohemoproteins subfamily. In the C-terminal section; belongs to the flavoprotein pyridine nucleotide cytochrome reductase family. Requires heme b as cofactor. FAD is required as a cofactor.

It catalyses the reaction 2 nitric oxide + NADPH + 2 O2 = 2 nitrate + NADP(+) + H(+). The enzyme catalyses 2 nitric oxide + NADH + 2 O2 = 2 nitrate + NAD(+) + H(+). This Rhodopirellula baltica (strain DSM 10527 / NCIMB 13988 / SH1) protein is Flavohemoprotein.